Reading from the N-terminus, the 269-residue chain is Tryptophan synthase alpha chain (269 aa).

Active-site proton acceptor residues include E50 and D61.

Belongs to the TrpA family. In terms of assembly, tetramer of two alpha and two beta chains.

The enzyme catalyses (1S,2R)-1-C-(indol-3-yl)glycerol 3-phosphate + L-serine = D-glyceraldehyde 3-phosphate + L-tryptophan + H2O. The protein operates within amino-acid biosynthesis; L-tryptophan biosynthesis; L-tryptophan from chorismate: step 5/5. The alpha subunit is responsible for the aldol cleavage of indoleglycerol phosphate to indole and glyceraldehyde 3-phosphate. The sequence is that of Tryptophan synthase alpha chain from Francisella tularensis subsp. tularensis (strain WY96-3418).